Consider the following 120-residue polypeptide: uncharacterized protein (120 aa).

Transmembrane regions (helical) follow at residues Pro-8–Val-28 and Phe-55–Leu-75.

It localises to the membrane. This is an uncharacterized protein from Saccharomyces cerevisiae (strain ATCC 204508 / S288c) (Baker's yeast).